We begin with the raw amino-acid sequence, 138 residues long: Ribulose bisphosphate carboxylase small subunit (138 aa).

Belongs to the RuBisCO small chain family. Heterohexadecamer of 8 large and 8 small subunits.

It is found in the plastid. Its subcellular location is the chloroplast. RuBisCO catalyzes two reactions: the carboxylation of D-ribulose 1,5-bisphosphate, the primary event in carbon dioxide fixation, as well as the oxidative fragmentation of the pentose substrate in the photorespiration process. Both reactions occur simultaneously and in competition at the same active site. Although the small subunit is not catalytic it is essential for maximal activity. This Cyanidioschyzon merolae (strain NIES-3377 / 10D) (Unicellular red alga) protein is Ribulose bisphosphate carboxylase small subunit.